Reading from the N-terminus, the 65-residue chain is Large ribosomal subunit protein uL29 (65 aa).

This sequence belongs to the universal ribosomal protein uL29 family.

The protein is Large ribosomal subunit protein uL29 of Bacteroides thetaiotaomicron (strain ATCC 29148 / DSM 2079 / JCM 5827 / CCUG 10774 / NCTC 10582 / VPI-5482 / E50).